The sequence spans 654 residues: Probable protein phosphatase 2C 23 (654 aa).

The disordered stretch occupies residues 11–30 (CLTGGAGRNKKPELSILEPD). Residue serine 147 is modified to Phosphoserine. One can recognise a PPM-type phosphatase domain in the interval 243 to 645 (DVSLESQNLQ…DDVSIVVISL (403 aa)). Mn(2+)-binding residues include aspartate 280 and glycine 281. The interval 309–336 (DDPKTDAKSSDEADVENRDSSSEKKSKN) is disordered. Residues aspartate 573 and aspartate 636 each coordinate Mn(2+).

The protein belongs to the PP2C family. Mg(2+) serves as cofactor. The cofactor is Mn(2+). As to expression, expressed in seedlings, roots, leaves, stems, young inflorescences, flowers and siliques.

It is found in the nucleus. The catalysed reaction is O-phospho-L-seryl-[protein] + H2O = L-seryl-[protein] + phosphate. It carries out the reaction O-phospho-L-threonyl-[protein] + H2O = L-threonyl-[protein] + phosphate. Its function is as follows. Involved in leaf development regulation. This is Probable protein phosphatase 2C 23 (PLL4) from Arabidopsis thaliana (Mouse-ear cress).